The sequence spans 240 residues: Ribonuclease HII (240 aa).

The RNase H type-2 domain maps to 29 to 220 (EPIAGVDEAG…VRRAAGLEPL (192 aa)). The a divalent metal cation site is built by aspartate 35, glutamate 36, and aspartate 129.

This sequence belongs to the RNase HII family. Requires Mn(2+) as cofactor. It depends on Mg(2+) as a cofactor.

It localises to the cytoplasm. The enzyme catalyses Endonucleolytic cleavage to 5'-phosphomonoester.. Functionally, endonuclease that specifically degrades the RNA of RNA-DNA hybrids. The sequence is that of Ribonuclease HII from Nocardioides sp. (strain ATCC BAA-499 / JS614).